We begin with the raw amino-acid sequence, 75 residues long: Brevinin-2SN1 (75 aa).

Positions 1-22 (MFTMKKPLLFLFFLGTISLSFC) are cleaved as a signal peptide. The propeptide at 23–40 (EEERGADEDDEVEMTEEE) is removed in mature form. A disulfide bridge links C69 with C75.

It belongs to the frog skin active peptide (FSAP) family. Brevinin subfamily. As to expression, expressed by the skin glands.

It localises to the secreted. Antimicrobial peptide. Active against some Gram-negative and a variety of Gram-positive bacterial strains. Active against fungus C.glabrata 090902 but not against C.albicans ATCC 10231. Shows hemolytic activity against human erythrocytes. The protein is Brevinin-2SN1 of Sylvirana spinulosa (Fine-spined frog).